The chain runs to 383 residues: S-adenosylmethionine synthase (383 aa).

His15 is an ATP binding site. Asp17 provides a ligand contact to Mg(2+). Residue Glu43 participates in K(+) binding. 2 residues coordinate L-methionine: Glu56 and Gln99. The segment at 99 to 109 (QSPDINQGVDR) is flexible loop. ATP-binding positions include 164–166 (DAK), 230–231 (RF), Asp239, 245–246 (RK), Ala262, and Lys266. Residue Asp239 coordinates L-methionine. An L-methionine-binding site is contributed by Lys270.

The protein belongs to the AdoMet synthase family. In terms of assembly, homotetramer; dimer of dimers. Mg(2+) serves as cofactor. The cofactor is K(+).

Its subcellular location is the cytoplasm. It carries out the reaction L-methionine + ATP + H2O = S-adenosyl-L-methionine + phosphate + diphosphate. The protein operates within amino-acid biosynthesis; S-adenosyl-L-methionine biosynthesis; S-adenosyl-L-methionine from L-methionine: step 1/1. Catalyzes the formation of S-adenosylmethionine (AdoMet) from methionine and ATP. The overall synthetic reaction is composed of two sequential steps, AdoMet formation and the subsequent tripolyphosphate hydrolysis which occurs prior to release of AdoMet from the enzyme. The protein is S-adenosylmethionine synthase of Pectobacterium atrosepticum (strain SCRI 1043 / ATCC BAA-672) (Erwinia carotovora subsp. atroseptica).